The sequence spans 333 residues: MGVAIRDILADCKETLTWDDLSGIAALDAHNALYQFLSIIRQPDGTPLMNGAGRITSHLSGILFRTVNFLEKGIRPVFVFDGKPPEFKQETINERREHRARADEAWKTALREGDMEEAYKQASASARIDSHTIASSRELLDLLGIPWVQAPSEGEAQAAYMARQGKVTYAVSQDYDSLLFGSPVLVRNLTVSGRRKTRGRTITVNPERIVLSSFLDRLGVTREQLVKIGILVGTDFNPGIRGVGGKTALKIVRNGEFESVIAEKQPDFNPAPIRDFFLNPPVTDDYTLEWRTPDVEGVVEMLCGRYDFSEERVRSALAKVSVKATQKTLDAWF.

Residues 1–99 (MGVAIRDILA…ETINERREHR (99 aa)) form an N-domain region. The Mg(2+) site is built by Asp-28, Asp-81, Glu-153, Glu-155, Asp-174, Asp-176, and Asp-235. The tract at residues 117-255 (EAYKQASASA…KTALKIVRNG (139 aa)) is I-domain. The tract at residues 325–333 (TQKTLDAWF) is interaction with PCNA.

The protein belongs to the XPG/RAD2 endonuclease family. FEN1 subfamily. As to quaternary structure, interacts with PCNA. PCNA stimulates the nuclease activity without altering cleavage specificity. Mg(2+) is required as a cofactor.

Structure-specific nuclease with 5'-flap endonuclease and 5'-3' exonuclease activities involved in DNA replication and repair. During DNA replication, cleaves the 5'-overhanging flap structure that is generated by displacement synthesis when DNA polymerase encounters the 5'-end of a downstream Okazaki fragment. Binds the unpaired 3'-DNA end and kinks the DNA to facilitate 5' cleavage specificity. Cleaves one nucleotide into the double-stranded DNA from the junction in flap DNA, leaving a nick for ligation. Also involved in the base excision repair (BER) pathway. Acts as a genome stabilization factor that prevents flaps from equilibrating into structures that lead to duplications and deletions. Also possesses 5'-3' exonuclease activity on nicked or gapped double-stranded DNA. This is Flap endonuclease 1 from Methanoculleus marisnigri (strain ATCC 35101 / DSM 1498 / JR1).